Consider the following 160-residue polypeptide: Aspartate 1-decarboxylase 2 (160 aa).

Ser25 serves as the catalytic Schiff-base intermediate with substrate; via pyruvic acid. At Ser25 the chain carries Pyruvic acid (Ser). A substrate-binding site is contributed by Thr57. Tyr58 acts as the Proton donor in catalysis. 73–75 (GAA) lines the substrate pocket.

The protein belongs to the PanD family. As to quaternary structure, heterooctamer of four alpha and four beta subunits. It depends on pyruvate as a cofactor. Post-translationally, is synthesized initially as an inactive proenzyme, which is activated by self-cleavage at a specific serine bond to produce a beta-subunit with a hydroxyl group at its C-terminus and an alpha-subunit with a pyruvoyl group at its N-terminus.

The protein localises to the cytoplasm. The catalysed reaction is L-aspartate + H(+) = beta-alanine + CO2. The protein operates within cofactor biosynthesis; (R)-pantothenate biosynthesis; beta-alanine from L-aspartate: step 1/1. Functionally, catalyzes the pyruvoyl-dependent decarboxylation of aspartate to produce beta-alanine. The chain is Aspartate 1-decarboxylase 2 from Frankia casuarinae (strain DSM 45818 / CECT 9043 / HFP020203 / CcI3).